A 551-amino-acid polypeptide reads, in one-letter code: Rhodopsin kinase grk7-a (551 aa).

Position 36 is a phosphoserine (S36). Residues 57–174 (YQSICVEQPI…QNSPFYDRFL (118 aa)) enclose the RGS domain. The region spanning 189 to 451 (FYEFRILGKG…DDDPRKHAFF (263 aa)) is the Protein kinase domain. Residues 195–203 (LGKGGFGEV) and K218 contribute to the ATP site. The Proton acceptor role is filled by D314. In terms of domain architecture, AGC-kinase C-terminal spans 452-517 (KSINFQRLEA…GAIPISWQKE (66 aa)). S487 bears the Phosphoserine mark. Residues 529–551 (DPSREATGGGGNSGEKSGVCSIL) form a disordered region. Low complexity predominate over residues 542-551 (GEKSGVCSIL). A Cysteine methyl ester modification is found at C548. The S-geranylgeranyl cysteine moiety is linked to residue C548. The propeptide at 549-551 (SIL) is removed in mature form.

This sequence belongs to the protein kinase superfamily. AGC Ser/Thr protein kinase family. GPRK subfamily. In terms of processing, autophosphorylated in vitro at Ser-487. Phosphorylation at Ser-36 is regulated by light and activated by cAMP.

The protein localises to the membrane. The enzyme catalyses L-threonyl-[rhodopsin] + ATP = O-phospho-L-threonyl-[rhodopsin] + ADP + H(+). It catalyses the reaction L-seryl-[rhodopsin] + ATP = O-phospho-L-seryl-[rhodopsin] + ADP + H(+). Its function is as follows. Retina-specific kinase involved in the shutoff of the photoresponse and adaptation to changing light conditions via cone opsin phosphorylation, including rhodopsin (RHO). The sequence is that of Rhodopsin kinase grk7-a (grk7-a) from Xenopus laevis (African clawed frog).